A 315-amino-acid chain; its full sequence is High mobility group protein hmg-12 (315 aa).

The tract at residues 57 to 315 (VKNETDSEAV…AIDAFFDGSD (259 aa)) is disordered. Over residues 77 to 86 (ANDSPANTND) the composition is skewed to polar residues. The a.T hook 1 DNA-binding region spans 118-128 (PVKKGRGRPIK). Low complexity-rich tracts occupy residues 147–160 (AQTP…IDTA) and 196–205 (AADTDAIDTA).

The protein belongs to the HMGA family.

The protein localises to the nucleus. Transcriptional regulator. Binds to specific sequence motifs in regulatory elements. May recruit transcription factors, or may induce structural changes in chromatin, to thereby modulate embryonic expression of ATP-dependent chaperone cdc-48.1. This chain is High mobility group protein hmg-12, found in Caenorhabditis elegans.